The sequence spans 118 residues: CLAVATA3/ESR (CLE)-related protein 12 (118 aa).

Residues 1-35 form the signal peptide; that stretch reads MLRISSSSSMALKFSQILFIVLWLSLFFLLLHHLY. Composition is skewed to basic and acidic residues over residues 75 to 91 and 98 to 108; these read TPFH…RSGE and IDPRYGVEKRR. A disordered region spans residues 75 to 118; that stretch reads TPFHSRDNSRHNHRSGEQYDGDEIDPRYGVEKRRVPSGPNPLHH. Residues Pro110 and Pro113 each carry the hydroxyproline modification. Pro113 carries an O-linked (Ara...) hydroxyproline glycan.

This sequence belongs to the CLV3/ESR signal peptide family. In terms of processing, the O-glycosylation (arabinosylation) of the hydroxyproline Pro-113 enhances binding affinity of the CLE12p peptide for its receptor. As to expression, mostly expressed in seedlings, roots, flowers, stems and apex, and, to a lower extent, in leaves and siliques.

The protein resides in the secreted. The protein localises to the extracellular space. Functionally, extracellular signal peptide that regulates cell fate. Represses root apical meristem maintenance. The sequence is that of CLAVATA3/ESR (CLE)-related protein 12 from Arabidopsis thaliana (Mouse-ear cress).